The primary structure comprises 209 residues: Thymidine kinase (209 aa).

Residues 16-23 and 90-93 contribute to the ATP site; these read GPMFAGKT and DESQ. Glutamate 91 functions as the Proton acceptor in the catalytic mechanism.

Belongs to the thymidine kinase family. In terms of assembly, homotetramer.

The protein localises to the cytoplasm. It carries out the reaction thymidine + ATP = dTMP + ADP + H(+). In Aster yellows witches'-broom phytoplasma (strain AYWB), this protein is Thymidine kinase.